A 279-amino-acid chain; its full sequence is Proteasome subunit beta (279 aa).

Positions 1-56 are cleaved as a propeptide — removed in mature form; by autocatalysis; that stretch reads MASQAMSWRGEGERVVRDLAAASTSSFVEHLSQSRPDLLPFGQALPAGVLPQTPHA. Catalysis depends on Thr-57, which acts as the Nucleophile.

Belongs to the peptidase T1B family. In terms of assembly, the 20S proteasome core is composed of 14 alpha and 14 beta subunits that assemble into four stacked heptameric rings, resulting in a barrel-shaped structure. The two inner rings, each composed of seven catalytic beta subunits, are sandwiched by two outer rings, each composed of seven alpha subunits. The catalytic chamber with the active sites is on the inside of the barrel. Has a gated structure, the ends of the cylinder being occluded by the N-termini of the alpha-subunits. Is capped by the proteasome-associated ATPase, ARC.

The protein resides in the cytoplasm. It catalyses the reaction Cleavage of peptide bonds with very broad specificity.. It participates in protein degradation; proteasomal Pup-dependent pathway. Its activity is regulated as follows. The formation of the proteasomal ATPase ARC-20S proteasome complex, likely via the docking of the C-termini of ARC into the intersubunit pockets in the alpha-rings, may trigger opening of the gate for substrate entry. Interconversion between the open-gate and close-gate conformations leads to a dynamic regulation of the 20S proteasome proteolysis activity. Its function is as follows. Component of the proteasome core, a large protease complex with broad specificity involved in protein degradation. The polypeptide is Proteasome subunit beta (Renibacterium salmoninarum (strain ATCC 33209 / DSM 20767 / JCM 11484 / NBRC 15589 / NCIMB 2235)).